A 360-amino-acid chain; its full sequence is Phospho-N-acetylmuramoyl-pentapeptide-transferase (360 aa).

The next 10 helical transmembrane spans lie at 25–45 (RAIL…PWVI), 73–93 (TMGG…WADL), 97–117 (YVLA…VDDY), 132–152 (WKYF…FVTA), 168–188 (VAWQ…VGFS), 199–219 (GLAI…AYLV), 236–256 (SGEL…FLWF), 263–283 (VFMG…IAVI), 288–308 (IVFF…ILQV), and 339–359 (IVRF…TLKI).

The protein belongs to the glycosyltransferase 4 family. MraY subfamily. Requires Mg(2+) as cofactor.

It is found in the cell inner membrane. It carries out the reaction UDP-N-acetyl-alpha-D-muramoyl-L-alanyl-gamma-D-glutamyl-meso-2,6-diaminopimeloyl-D-alanyl-D-alanine + di-trans,octa-cis-undecaprenyl phosphate = di-trans,octa-cis-undecaprenyl diphospho-N-acetyl-alpha-D-muramoyl-L-alanyl-D-glutamyl-meso-2,6-diaminopimeloyl-D-alanyl-D-alanine + UMP. It functions in the pathway cell wall biogenesis; peptidoglycan biosynthesis. In terms of biological role, catalyzes the initial step of the lipid cycle reactions in the biosynthesis of the cell wall peptidoglycan: transfers peptidoglycan precursor phospho-MurNAc-pentapeptide from UDP-MurNAc-pentapeptide onto the lipid carrier undecaprenyl phosphate, yielding undecaprenyl-pyrophosphoryl-MurNAc-pentapeptide, known as lipid I. The chain is Phospho-N-acetylmuramoyl-pentapeptide-transferase from Teredinibacter turnerae (strain ATCC 39867 / T7901).